We begin with the raw amino-acid sequence, 485 residues long: Aspartyl/glutamyl-tRNA(Asn/Gln) amidotransferase subunit B (485 aa).

The protein belongs to the GatB/GatE family. GatB subfamily. In terms of assembly, heterotrimer of A, B and C subunits.

It carries out the reaction L-glutamyl-tRNA(Gln) + L-glutamine + ATP + H2O = L-glutaminyl-tRNA(Gln) + L-glutamate + ADP + phosphate + H(+). The catalysed reaction is L-aspartyl-tRNA(Asn) + L-glutamine + ATP + H2O = L-asparaginyl-tRNA(Asn) + L-glutamate + ADP + phosphate + 2 H(+). Allows the formation of correctly charged Asn-tRNA(Asn) or Gln-tRNA(Gln) through the transamidation of misacylated Asp-tRNA(Asn) or Glu-tRNA(Gln) in organisms which lack either or both of asparaginyl-tRNA or glutaminyl-tRNA synthetases. The reaction takes place in the presence of glutamine and ATP through an activated phospho-Asp-tRNA(Asn) or phospho-Glu-tRNA(Gln). The protein is Aspartyl/glutamyl-tRNA(Asn/Gln) amidotransferase subunit B of Paramagnetospirillum magneticum (strain ATCC 700264 / AMB-1) (Magnetospirillum magneticum).